Here is a 146-residue protein sequence, read N- to C-terminus: Superoxide dismutase [Mn] 2 (146 aa).

Residues histidine 42, aspartate 126, and histidine 130 each coordinate Mn(2+).

Belongs to the iron/manganese superoxide dismutase family. Mn(2+) is required as a cofactor.

The catalysed reaction is 2 superoxide + 2 H(+) = H2O2 + O2. Destroys superoxide anion radicals which are normally produced within the cells and which are toxic to biological systems. The protein is Superoxide dismutase [Mn] 2 (sod2) of Haloferax mediterranei (Halobacterium mediterranei).